The primary structure comprises 158 residues: MLNQLDNLTERVRGSNKLVDRWLHVRKHLLVAYYNLVGIKPGKESYMRLNEKALDDFCQSLVDYLSAGHFSIYERILHKLEGNGQLARAAKIWPQLEANTQQIMDYYDSSLETAIDHDNYLEFQQVLSDIGEALEARFVLEDKLILLVLDAARVKYPA.

The protein belongs to the Rsd/AlgQ family. In terms of assembly, interacts with RpoD.

The protein resides in the cytoplasm. In terms of biological role, binds RpoD and negatively regulates RpoD-mediated transcription activation by preventing the interaction between the primary sigma factor RpoD with the catalytic core of the RNA polymerase and with promoter DNA. May be involved in replacement of the RNA polymerase sigma subunit from RpoD to RpoS during the transition from exponential growth to the stationary phase. This Escherichia fergusonii (strain ATCC 35469 / DSM 13698 / CCUG 18766 / IAM 14443 / JCM 21226 / LMG 7866 / NBRC 102419 / NCTC 12128 / CDC 0568-73) protein is Regulator of sigma D.